Consider the following 158-residue polypeptide: 2-C-methyl-D-erythritol 2,4-cyclodiphosphate synthase (158 aa).

Residues aspartate 9 and histidine 11 each contribute to the a divalent metal cation site. 4-CDP-2-C-methyl-D-erythritol 2-phosphate is bound by residues 9–11 (DVH) and 35–36 (HS). Histidine 43 is an a divalent metal cation binding site. 4-CDP-2-C-methyl-D-erythritol 2-phosphate contacts are provided by residues 57 to 59 (DIG), 62 to 66 (FPDTD), 101 to 107 (AQKPKMA), 133 to 136 (TTTE), phenylalanine 140, and arginine 143.

This sequence belongs to the IspF family. In terms of assembly, homotrimer. It depends on a divalent metal cation as a cofactor.

The enzyme catalyses 4-CDP-2-C-methyl-D-erythritol 2-phosphate = 2-C-methyl-D-erythritol 2,4-cyclic diphosphate + CMP. It functions in the pathway isoprenoid biosynthesis; isopentenyl diphosphate biosynthesis via DXP pathway; isopentenyl diphosphate from 1-deoxy-D-xylulose 5-phosphate: step 4/6. Its function is as follows. Involved in the biosynthesis of isopentenyl diphosphate (IPP) and dimethylallyl diphosphate (DMAPP), two major building blocks of isoprenoid compounds. Catalyzes the conversion of 4-diphosphocytidyl-2-C-methyl-D-erythritol 2-phosphate (CDP-ME2P) to 2-C-methyl-D-erythritol 2,4-cyclodiphosphate (ME-CPP) with a corresponding release of cytidine 5-monophosphate (CMP). The sequence is that of 2-C-methyl-D-erythritol 2,4-cyclodiphosphate synthase from Bacillus pumilus (strain SAFR-032).